The chain runs to 616 residues: ATP-dependent RNA helicase VAD1 (616 aa).

The tract at residues 1–35 (MASSSTLANDDWKQGLAAPPKDLRPQTEDVTATQG) is disordered. A Q motif motif is present at residues 36-64 (SRFEDFGLRRELLMGIYTAGFERPSPIQE). The 172-residue stretch at 67–238 (IPMALTGRDI…DQHMVQPYEI (172 aa)) folds into the Helicase ATP-binding domain. ATP is bound at residue 80–87 (AKNGTGKT). The short motif at 186-189 (DEAD) is the DEAD box element. The Helicase C-terminal domain maps to 248–408 (GVTQYYAYVE…PIPAVIDPVL (161 aa)). A disordered region spans residues 416–616 (EEERESPPPK…GASQSQQAQA (201 aa)). Composition is skewed to low complexity over residues 427 to 441 (AAIAAPPAQQQPQQR), 458 to 500 (PAAA…NSSP), and 508 to 523 (YPQQAPTQAQGPAQMQ). A compositionally biased stretch (polar residues) spans 529-545 (PATQPQASAQIPVQGQT). Low complexity-rich tracts occupy residues 550 to 579 (PRAQQQGQQQPSQPGQAEGQSQPNRRPNTG) and 606 to 616 (AGASQSQQAQA).

The protein belongs to the DEAD box helicase family. DDX6/DHH1 subfamily.

It is found in the cytoplasm. The protein resides in the P-body. It catalyses the reaction ATP + H2O = ADP + phosphate + H(+). ATP-dependent RNA helicase involved in mRNA turnover, and more specifically in mRNA decapping. Is involved in G1/S DNA-damage checkpoint recovery, probably through the regulation of the translational status of a subset of mRNAs. May also have a role in translation and mRNA nuclear export. Blocks autophagy in nutrient-rich conditions by, at least partly, binding and repressing the expression of a set of ATG genes, including ATG3, ATG7, ATG8, ATG19, ATG20 and ATG22. VAD1-mediated repression of autophagy is regulated by TOR-dependent phosphorylation of the decapping enzyme DCP2. Regulates multiple virulence-associated genes. Repression of autophagy by VAD1 also regulates the pathogenesis. This Cryptococcus neoformans var. grubii serotype A (strain H99 / ATCC 208821 / CBS 10515 / FGSC 9487) (Filobasidiella neoformans var. grubii) protein is ATP-dependent RNA helicase VAD1.